The following is a 98-amino-acid chain: Large ribosomal subunit protein eL21 (98 aa).

This sequence belongs to the eukaryotic ribosomal protein eL21 family.

The chain is Large ribosomal subunit protein eL21 from Korarchaeum cryptofilum (strain OPF8).